A 539-amino-acid polypeptide reads, in one-letter code: MIO-dependent tyrosine 2,3-aminomutase (539 aa).

Tyr-63 functions as the Proton donor/acceptor in the catalytic mechanism. Residue His-93 participates in substrate binding. The 5-imidazolinone (Ala-Gly) cross-link spans 152–154 (ASG). Ser-153 is subject to 2,3-didehydroalanine (Ser). Residues Asn-205 and Arg-311 each coordinate substrate.

Belongs to the TAL/TAM family. In terms of assembly, homotetramer; dimer of dimers. Post-translationally, contains an active site 4-methylidene-imidazol-5-one (MIO), which is formed autocatalytically by cyclization and dehydration of residues Ala-Ser-Gly.

The enzyme catalyses L-tyrosine = 3-amino-3-(4-hydroxyphenyl)propanoate. The catalysed reaction is L-tyrosine = (E)-4-coumarate + NH4(+). Its function is as follows. Involved in the biosynthesis of the enediyne antitumor antibiotic C-1027. Catalyzes the MIO-dependent deamination of L-tyrosine generating the corresponding alpha,beta-unsaturated acid, (S)-beta-tyrosine. This chain is MIO-dependent tyrosine 2,3-aminomutase, found in Streptomyces globisporus.